The primary structure comprises 224 residues: Small ribosomal subunit protein uS3 (224 aa).

Residues leucine 20–proline 89 form the KH type-2 domain.

It belongs to the universal ribosomal protein uS3 family. Part of the 30S ribosomal subunit.

In terms of biological role, binds the lower part of the 30S subunit head. This Staphylothermus marinus (strain ATCC 43588 / DSM 3639 / JCM 9404 / F1) protein is Small ribosomal subunit protein uS3.